The chain runs to 416 residues: MARINDHFLKLKTGYLFPEIARRVQAFATAHPEAQIIKMGIGDVTEPLPEACRTAMIRAVEEMGERATFRGYGPEQGYEWLRQAIARHDFQARNCDIDASEIFVSDGSKCDCGNILDILGHDNTIAITDPVYPVYVDTNVMAGHTGPANERGEYEGLVYLPITAENHFTASLPSQKVDVIYLCFPNNPTGAVATREHLQNWVDYARAHGSLILFDAAYEAYITEPGIPHSIYEIPGARECAIEFRSFSKTAGFTGTRCAFTVVPKSLRGQAADGSWVDLWSLWYRRQSTKFNGVSYIVQRGAEAVYSEAGQAQVQGLVQFYLENARIIRQQLAEVGIQVYGGVNAPYVWVKTPDGLSSWEFFDKLLHTCHVVGTPGSGFGSAGEGYLRLSAFNSRANVEEAMRRIGSVFAGAGAVG.

Positions 15 and 42 each coordinate substrate. Residues Y72, 108–109 (SK), Y132, N187, Y218, and 246–248 (SFS) contribute to the pyridoxal 5'-phosphate site. Substrate contacts are provided by K109, Y132, and N187. K249 is modified (N6-(pyridoxal phosphate)lysine). Residues R257 and N292 each contribute to the pyridoxal 5'-phosphate site. The substrate site is built by N292 and R388.

It belongs to the class-I pyridoxal-phosphate-dependent aminotransferase family. LL-diaminopimelate aminotransferase subfamily. In terms of assembly, homodimer. Pyridoxal 5'-phosphate serves as cofactor.

It carries out the reaction (2S,6S)-2,6-diaminopimelate + 2-oxoglutarate = (S)-2,3,4,5-tetrahydrodipicolinate + L-glutamate + H2O + H(+). It participates in amino-acid biosynthesis; L-lysine biosynthesis via DAP pathway; LL-2,6-diaminopimelate from (S)-tetrahydrodipicolinate (aminotransferase route): step 1/1. Its function is as follows. Involved in the synthesis of meso-diaminopimelate (m-DAP or DL-DAP), required for both lysine and peptidoglycan biosynthesis. Catalyzes the direct conversion of tetrahydrodipicolinate to LL-diaminopimelate. In Synechococcus sp. (strain JA-2-3B'a(2-13)) (Cyanobacteria bacterium Yellowstone B-Prime), this protein is LL-diaminopimelate aminotransferase.